The primary structure comprises 279 residues: Putative cysteine-rich repeat secretory protein 22 (279 aa).

The N-terminal stretch at 1-31 (MSSSSASKLLGSVLVFAMISVQIVFIHCVMS) is a signal peptide. 2 consecutive Gnk2-homologous domains span residues 44 to 146 (YLHH…PINS) and 152 to 276 (YEYN…LYRF).

It belongs to the cysteine-rich repeat secretory protein family.

It localises to the secreted. This Arabidopsis thaliana (Mouse-ear cress) protein is Putative cysteine-rich repeat secretory protein 22 (CRRSP22).